The primary structure comprises 476 residues: E3 SUMO-protein ligase EGR2 (476 aa).

Over residues 127–141 the composition is skewed to low complexity; it reads PASTTASSSVTSASP. Positions 127 to 178 are disordered; the sequence is PASTTASSSVTSASPNPLATGPLGVCTMSQTQPDLDHLYSPPPPPPPYSGCA. The short motif at 162–165 is the HCFC1-binding-motif (HBM) element; that stretch reads DHLY. Residue K247 is modified to N6-acetyllysine; by EP300. Disordered stretches follow at residues 275 to 300 and 318 to 341; these read GPSA…SSSA and RPIL…RPYP. The segment covering 281–290 has biased composition (gly residues); sequence TGPGASGGSE. C2H2-type zinc fingers lie at residues 340–364, 370–392, and 398–420; these read YPCP…IRIH, FQCR…IRTH, and FACD…TKIH. The interval 412–476 is disordered; sequence ERKRHTKIHL…APCSSRTRTP (65 aa). Residues 415 to 425 show a composition bias toward basic residues; sequence RHTKIHLRQKE. Over residues 429 to 476 the composition is skewed to low complexity; the sequence is SAPSASVPAPSTASCSGGVQPGGTLCSSNSSSLGGGPLAPCSSRTRTP.

This sequence belongs to the EGR C2H2-type zinc-finger protein family. In terms of assembly, interacts with HCFC1. Interacts with WWP2. Interacts with UBC9. Interacts with CITED1. Interacts (via phosphorylated form) with SFN. Post-translationally, ubiquitinated by WWP2 leading to proteasomal degradation. In terms of processing, acetylated at Lys-247. May be deacetylated by HDAC6, HDAC10 or SIRT1.

The protein resides in the nucleus. Its pathway is protein modification; protein sumoylation. Functionally, sequence-specific DNA-binding transcription factor. Plays a role in hindbrain segmentation by regulating the expression of a subset of homeobox containing genes and in Schwann cell myelination by regulating the expression of genes involved in the formation and maintenance of myelin. Binds to two EGR2-consensus sites EGR2A (5'-CTGTAGGAG-3') and EGR2B (5'-ATGTAGGTG-3') in the HOXB3 enhancer and promotes HOXB3 transcriptional activation. Binds to specific DNA sites located in the promoter region of HOXA4, HOXB2 and ERBB2. Regulates hindbrain segmentation by controlling the expression of Hox genes, such as HOXA4, HOXB3 and HOXB2, and thereby specifying odd and even rhombomeres. Promotes the expression of HOXB3 in the rhombomere r5 in the hindbrain. Regulates myelination in the peripheral nervous system after birth, possibly by regulating the expression of myelin proteins, such as MPZ, and by promoting the differentiation of Schwann cells. Involved in the development of the jaw openener musculature, probably by playing a role in its innervation through trigeminal motor neurons. May play a role in adipogenesis, possibly by regulating the expression of CEBPB. In terms of biological role, E3 SUMO-protein ligase helping SUMO1 conjugation to its coregulators NAB1 and NAB2, whose sumoylation down-regulates EGR2 transcriptional activity. This chain is E3 SUMO-protein ligase EGR2 (EGR2), found in Homo sapiens (Human).